The chain runs to 257 residues: MLILLSCAKTMSDVSKTKTPLTTFPGFRKEAAEVALQMSQFSVEELERLLKVNPKIAVENYRRYQAFHSEGTRELPALLAYTGIVFKRVHPQDFSEEDFCYAQDHLRLTSFCYGLLRPLDMIRPYRLEGDVRLPEPGNRTMFDYWKPILTDRFIADIKKAGGVLCNLASDEMRGLFDWKRVEKEVRVITPEFHVWKNGKLATVVVYTKMSRGEMTRYILKNRIESVEQLKTFAWEGFEFNEQLSDETKYVFTNGKTE.

This sequence belongs to the UPF0246 family.

This is UPF0246 protein BF3795 from Bacteroides fragilis (strain ATCC 25285 / DSM 2151 / CCUG 4856 / JCM 11019 / LMG 10263 / NCTC 9343 / Onslow / VPI 2553 / EN-2).